The primary structure comprises 201 residues: L(+)-tartrate dehydratase subunit beta (201 aa).

Histidine 37 is an active-site residue.

It belongs to the class-I fumarase family. As to quaternary structure, heterotetramer of two alpha and two beta subunits.

It carries out the reaction (2R,3R)-tartrate = oxaloacetate + H2O. This is L(+)-tartrate dehydratase subunit beta (ttdB) from Escherichia coli O6:K15:H31 (strain 536 / UPEC).